The sequence spans 204 residues: HTH-type transcriptional repressor KstR2 (204 aa).

In terms of domain architecture, HTH tetR-type spans 13-73 (SGRRTELLDI…EILRGFLDDL (61 aa)). A DNA-binding region (H-T-H motif) is located at residues 36 to 55 (TVRDIADAAGILSGSLYHHF).

As to quaternary structure, homodimer.

In terms of biological role, controls the expression of a small regulon that may play a role in the utilization of cholesterol. This Rhodococcus jostii (strain RHA1) protein is HTH-type transcriptional repressor KstR2 (kstR2).